A 93-amino-acid polypeptide reads, in one-letter code: Large ribosomal subunit protein uL23cz/uL23cy (93 aa).

Belongs to the universal ribosomal protein uL23 family. In terms of assembly, part of the 50S ribosomal subunit.

The protein resides in the plastid. It is found in the chloroplast. In terms of biological role, binds to 23S rRNA. The chain is Large ribosomal subunit protein uL23cz/uL23cy (rpl23-A) from Nandina domestica (Heavenly bamboo).